Here is a 481-residue protein sequence, read N- to C-terminus: Keratin, type I cytoskeletal 39 (481 aa).

The interval M1–V25 is disordered. A head region spans residues M1–E90. The IF rod domain maps to E90–L401. The tract at residues K91–E125 is coil 1A. The segment at C126–D136 is linker 1. Positions Y137 to C237 are coil 1B. The interval Q238 to V253 is linker 12. The segment at D254 to L397 is coil 2. The interval D398 to V481 is tail.

This sequence belongs to the intermediate filament family. Heterotetramer of two type I and two type II keratins.

In terms of biological role, may play a role in late hair differentiation. The protein is Keratin, type I cytoskeletal 39 (Krt39) of Rattus norvegicus (Rat).